We begin with the raw amino-acid sequence, 146 residues long: Small ribosomal subunit protein uS15 (146 aa).

Belongs to the universal ribosomal protein uS15 family. Part of the 30S ribosomal subunit.

In Picrophilus torridus (strain ATCC 700027 / DSM 9790 / JCM 10055 / NBRC 100828 / KAW 2/3), this protein is Small ribosomal subunit protein uS15.